Consider the following 576-residue polypeptide: Proline--tRNA ligase (576 aa).

Belongs to the class-II aminoacyl-tRNA synthetase family. ProS type 1 subfamily. In terms of assembly, homodimer.

The protein resides in the cytoplasm. The enzyme catalyses tRNA(Pro) + L-proline + ATP = L-prolyl-tRNA(Pro) + AMP + diphosphate. Catalyzes the attachment of proline to tRNA(Pro) in a two-step reaction: proline is first activated by ATP to form Pro-AMP and then transferred to the acceptor end of tRNA(Pro). As ProRS can inadvertently accommodate and process non-cognate amino acids such as alanine and cysteine, to avoid such errors it has two additional distinct editing activities against alanine. One activity is designated as 'pretransfer' editing and involves the tRNA(Pro)-independent hydrolysis of activated Ala-AMP. The other activity is designated 'posttransfer' editing and involves deacylation of mischarged Ala-tRNA(Pro). The misacylated Cys-tRNA(Pro) is not edited by ProRS. The sequence is that of Proline--tRNA ligase from Magnetococcus marinus (strain ATCC BAA-1437 / JCM 17883 / MC-1).